The sequence spans 331 residues: GTP 3',8-cyclase (331 aa).

The Radical SAM core domain occupies 6–234; that stretch reads PFNRKIDYLR…PATGKSHDGP (229 aa). Position 15 (R15) interacts with GTP. [4Fe-4S] cluster is bound by residues C22 and C26. Y28 is an S-adenosyl-L-methionine binding site. Residue C29 coordinates [4Fe-4S] cluster. R66 provides a ligand contact to GTP. G70 contacts S-adenosyl-L-methionine. S97 is a GTP binding site. Position 121 (S121) interacts with S-adenosyl-L-methionine. K158 lines the GTP pocket. M192 provides a ligand contact to S-adenosyl-L-methionine. Residues C258 and C261 each contribute to the [4Fe-4S] cluster site. Position 263–265 (263–265) interacts with GTP; the sequence is RVR. C275 serves as a coordination point for [4Fe-4S] cluster.

The protein belongs to the radical SAM superfamily. MoaA family. Monomer and homodimer. [4Fe-4S] cluster serves as cofactor.

It carries out the reaction GTP + AH2 + S-adenosyl-L-methionine = (8S)-3',8-cyclo-7,8-dihydroguanosine 5'-triphosphate + 5'-deoxyadenosine + L-methionine + A + H(+). Its pathway is cofactor biosynthesis; molybdopterin biosynthesis. Functionally, catalyzes the cyclization of GTP to (8S)-3',8-cyclo-7,8-dihydroguanosine 5'-triphosphate. The chain is GTP 3',8-cyclase from Hydrogenovibrio crunogenus (strain DSM 25203 / XCL-2) (Thiomicrospira crunogena).